The primary structure comprises 90 residues: Trp-8 progonadoliberin (90 aa).

An N-terminal signal peptide occupies residues Met1–Gly24. The residue at position 25 (Gln25) is a Pyrrolidone carboxylic acid. At Gly34 the chain carries Glycine amide.

The protein belongs to the GnRH family. As to expression, expressed in forebrain but not in testis, ovary, kidney and liver.

The protein resides in the secreted. In terms of biological role, stimulates the secretion of gonadotropins. The polypeptide is Trp-8 progonadoliberin (Rana dybowskii (Dybovsky's frog)).